A 360-amino-acid chain; its full sequence is D-alanine--D-alanine ligase (360 aa).

The 210-residue stretch at 134–343 (KILAQRVGVP…YTELITRLIE (210 aa)) folds into the ATP-grasp domain. 169–224 (AEKLGRDMFVKPSNQGSSVGVSHVTNADEYAAALKEAFKYDDKVLVEETVPGTEVE) lines the ATP pocket. 3 residues coordinate Mg(2+): Asp297, Glu310, and Asn312.

It belongs to the D-alanine--D-alanine ligase family. Requires Mg(2+) as cofactor. It depends on Mn(2+) as a cofactor.

It is found in the cytoplasm. It catalyses the reaction 2 D-alanine + ATP = D-alanyl-D-alanine + ADP + phosphate + H(+). The protein operates within cell wall biogenesis; peptidoglycan biosynthesis. Functionally, cell wall formation. The sequence is that of D-alanine--D-alanine ligase from Lactobacillus helveticus (strain DPC 4571).